We begin with the raw amino-acid sequence, 60 residues long: Large ribosomal subunit protein uL30 (60 aa).

Belongs to the universal ribosomal protein uL30 family. As to quaternary structure, part of the 50S ribosomal subunit.

In Salinispora arenicola (strain CNS-205), this protein is Large ribosomal subunit protein uL30.